We begin with the raw amino-acid sequence, 329 residues long: Beta-ketoacyl-[acyl-carrier-protein] synthase III (329 aa).

Catalysis depends on residues Cys-113 and His-255. Residues 256-260 (QANQR) are ACP-binding. Asn-285 is an active-site residue.

The protein belongs to the thiolase-like superfamily. FabH family. Homodimer.

It localises to the cytoplasm. The catalysed reaction is malonyl-[ACP] + acetyl-CoA + H(+) = 3-oxobutanoyl-[ACP] + CO2 + CoA. It functions in the pathway lipid metabolism; fatty acid biosynthesis. In terms of biological role, catalyzes the condensation reaction of fatty acid synthesis by the addition to an acyl acceptor of two carbons from malonyl-ACP. Catalyzes the first condensation reaction which initiates fatty acid synthesis and may therefore play a role in governing the total rate of fatty acid production. Possesses both acetoacetyl-ACP synthase and acetyl transacylase activities. Its substrate specificity determines the biosynthesis of branched-chain and/or straight-chain of fatty acids. The chain is Beta-ketoacyl-[acyl-carrier-protein] synthase III from Chlorobium luteolum (strain DSM 273 / BCRC 81028 / 2530) (Pelodictyon luteolum).